Reading from the N-terminus, the 188-residue chain is Acyl-acyl carrier protein thioesterase ATL2, chloroplastic (188 aa).

The N-terminal 47 residues, 1 to 47 (MFQATSTGAQIMHAAFPRSWRRGHVLPLRSAKIFKPLACLELRGSTG), are a transit peptide targeting the chloroplast. D64 is a catalytic residue.

It belongs to the 4-hydroxybenzoyl-CoA thioesterase family. Expressed in endodermal and peridermal cells in young and mature roots, in boundaries of stem lateral organs and developing seeds.

It localises to the plastid. The protein resides in the chloroplast. In terms of biological role, acyl-ACP thioesterase involved in the production of fatty acids and beta-keto fatty acids. Can produce beta-keto fatty acids of medium chain (8:0 and 10:0) and small amounts of 8:0 fatty acid when expressed in a heterologous organism (E.coli). May play a role in suberin biosynthesis. This chain is Acyl-acyl carrier protein thioesterase ATL2, chloroplastic, found in Arabidopsis thaliana (Mouse-ear cress).